Reading from the N-terminus, the 247-residue chain is Caffeoyl-CoA O-methyltransferase 2 (247 aa).

Lys21 lines the substrate pocket. S-adenosyl-L-methionine contacts are provided by residues Thr63, Glu85, 87-88, Ser93, Asp111, and Ala140; that span reads GV. Asp163 serves as a coordination point for substrate. Asp163 contacts a divalent metal cation. Residue Asp165 coordinates S-adenosyl-L-methionine. Positions 189 and 190 each coordinate a divalent metal cation. Asn194 serves as a coordination point for substrate.

It belongs to the class I-like SAM-binding methyltransferase superfamily. Cation-dependent O-methyltransferase family. CCoAMT subfamily. A divalent metal cation is required as a cofactor.

The catalysed reaction is (E)-caffeoyl-CoA + S-adenosyl-L-methionine = (E)-feruloyl-CoA + S-adenosyl-L-homocysteine + H(+). It functions in the pathway aromatic compound metabolism; phenylpropanoid biosynthesis. Functionally, methylates caffeoyl-CoA to feruloyl-CoA and 5-hydroxyferuloyl-CoA to sinapoyl-CoA. Plays a role in the synthesis of feruloylated polysaccharides. Involved in the reinforcement of the plant cell wall. Also involved in the responding to wounding or pathogen challenge by the increased formation of cell wall-bound ferulic acid polymers. This is Caffeoyl-CoA O-methyltransferase 2 (CCOAOMT2) from Populus trichocarpa (Western balsam poplar).